The primary structure comprises 140 residues: MVVKAIARNSIGRNGVGAFVFPCRKITLQFCNWGGSSEGMRKFLTSKRLDKWGQEFPWIQFEVMRKSGHPLLRAEYTNGREKVICVRNLNIDNVENKLKLLKDSDGDILRRRTKNDNVESLNSSVRGIWSPLHAAKRHRI.

It belongs to the mitochondrion-specific ribosomal protein mL43 family. In terms of assembly, component of the mitochondrial large ribosomal subunit (mt-LSU). Mature yeast 74S mitochondrial ribosomes consist of a small (37S) and a large (54S) subunit. The 37S small subunit contains a 15S ribosomal RNA (15S mt-rRNA) and 34 different proteins. The 54S large subunit contains a 21S rRNA (21S mt-rRNA) and 46 different proteins.

The protein localises to the mitochondrion. Functionally, component of the mitochondrial ribosome (mitoribosome), a dedicated translation machinery responsible for the synthesis of mitochondrial genome-encoded proteins, including at least some of the essential transmembrane subunits of the mitochondrial respiratory chain. The mitoribosomes are attached to the mitochondrial inner membrane and translation products are cotranslationally integrated into the membrane. Also has an extraribosomal function, being essential for mitochondrial genome integrity. May interact with MHR1 to take part in the mtDNA repair mechanism. In Saccharomyces cerevisiae (strain ATCC 204508 / S288c) (Baker's yeast), this protein is Large ribosomal subunit protein mL43 (MRPL51).